The sequence spans 346 residues: RNA polymerase II holoenzyme cyclin-like subunit (346 aa).

The Cyclin N-terminal domain occupies asparagine 59 to histidine 158.

It belongs to the cyclin family. Cyclin C subfamily. In terms of assembly, component of the SRB8-11 complex, a regulatory module of the Mediator complex.

It localises to the nucleus. Component of the SRB8-11 complex. The SRB8-11 complex is a regulatory module of the Mediator complex which is itself involved in regulation of basal and activated RNA polymerase II-dependent transcription. The SRB8-11 complex may be involved in the transcriptional repression of a subset of genes regulated by Mediator. It may inhibit the association of the Mediator complex with RNA polymerase II to form the holoenzyme complex. The SRB8-11 complex phosphorylates the C-terminal domain (CTD) of the largest subunit of RNA polymerase II. In Scheffersomyces stipitis (strain ATCC 58785 / CBS 6054 / NBRC 10063 / NRRL Y-11545) (Yeast), this protein is RNA polymerase II holoenzyme cyclin-like subunit (SSN8).